The primary structure comprises 415 residues: Histidine--tRNA ligase (415 aa).

It belongs to the class-II aminoacyl-tRNA synthetase family. In terms of assembly, homodimer.

It localises to the cytoplasm. It carries out the reaction tRNA(His) + L-histidine + ATP = L-histidyl-tRNA(His) + AMP + diphosphate + H(+). This is Histidine--tRNA ligase from Phytoplasma australiense.